The following is an 81-amino-acid chain: ATP synthase subunit c, chloroplastic (81 aa).

2 consecutive transmembrane segments (helical) span residues 3 to 23 (PLIAAASVIAAGLAVGLASIG) and 57 to 77 (LAFMEALTIYGLVVALALLFA).

It belongs to the ATPase C chain family. In terms of assembly, F-type ATPases have 2 components, F(1) - the catalytic core - and F(0) - the membrane proton channel. F(1) has five subunits: alpha(3), beta(3), gamma(1), delta(1), epsilon(1). F(0) has four main subunits: a(1), b(1), b'(1) and c(10-14). The alpha and beta chains form an alternating ring which encloses part of the gamma chain. F(1) is attached to F(0) by a central stalk formed by the gamma and epsilon chains, while a peripheral stalk is formed by the delta, b and b' chains.

The protein resides in the plastid. It is found in the chloroplast thylakoid membrane. F(1)F(0) ATP synthase produces ATP from ADP in the presence of a proton or sodium gradient. F-type ATPases consist of two structural domains, F(1) containing the extramembraneous catalytic core and F(0) containing the membrane proton channel, linked together by a central stalk and a peripheral stalk. During catalysis, ATP synthesis in the catalytic domain of F(1) is coupled via a rotary mechanism of the central stalk subunits to proton translocation. In terms of biological role, key component of the F(0) channel; it plays a direct role in translocation across the membrane. A homomeric c-ring of between 10-14 subunits forms the central stalk rotor element with the F(1) delta and epsilon subunits. The chain is ATP synthase subunit c, chloroplastic from Pisum sativum (Garden pea).